An 823-amino-acid chain; its full sequence is Ubiquitin carboxyl-terminal hydrolase 16 (823 aa).

The UBP-type zinc finger occupies 22–142 (PVCRHIRKGL…QVVDYVRKQA (121 aa)). Positions 24, 26, 48, 51, 74, 77, 82, 90, 94, 103, 116, and 119 each coordinate Zn(2+). A Glycyl lysine isopeptide (Lys-Gly) (interchain with G-Cter in SUMO2) cross-link involves residue K140. The disordered stretch occupies residues 146 to 189 (TPKPAEKDNGNIELENKKLEKESKNEQEREKKENMAKENPPMNS). The segment covering 149–181 (PAEKDNGNIELENKKLEKESKNEQEREKKENMA) has biased composition (basic and acidic residues). S189 carries the post-translational modification Phosphoserine. One can recognise a USP domain in the interval 196-822 (KGLSNLGNTC…QAYLLFYERI (627 aa)). The Nucleophile role is filled by C205. Residues 394-408 (SGKKSVNDKNLKKTV) show a composition bias toward basic and acidic residues. The tract at residues 394–460 (SGKKSVNDKN…AKNQRRQQKI (67 aa)) is disordered. The segment covering 409-420 (EDEDQDSEEEKD) has biased composition (acidic residues). S415 is modified (phosphoserine). A compositionally biased stretch (basic and acidic residues) spans 421-430 (NDSYIKERSD). A compositionally biased stretch (basic residues) spans 438 to 458 (HLQKKAKKQAKKQAKNQRRQQ). Phosphoserine is present on residues S531 and S552. T554 carries the phosphothreonine modification. H758 functions as the Proton acceptor in the catalytic mechanism.

The protein belongs to the peptidase C19 family. USP16 subfamily. As to quaternary structure, homotetramer. Associates with late pre-40S ribosomes. Interacts with CEP78; promoting deubiquitination of tektins. In terms of processing, phosphorylated at the onset of mitosis and dephosphorylated during the metaphase/anaphase transition. Phosphorylation by AURKB enhances the deubiquitinase activity. In terms of tissue distribution, present in all the tissues examined including fetal brain, lung, liver, kidney, and adult heart, brain, placenta, lung, liver, skeletal muscle, kidney and pancreas.

The protein resides in the nucleus. It is found in the cytoplasm. It catalyses the reaction Thiol-dependent hydrolysis of ester, thioester, amide, peptide and isopeptide bonds formed by the C-terminal Gly of ubiquitin (a 76-residue protein attached to proteins as an intracellular targeting signal).. Its function is as follows. Specifically deubiquitinates 'Lys-120' of histone H2A (H2AK119Ub), a specific tag for epigenetic transcriptional repression, thereby acting as a coactivator. Deubiquitination of histone H2A is a prerequisite for subsequent phosphorylation at 'Ser-11' of histone H3 (H3S10ph), and is required for chromosome segregation when cells enter into mitosis. In resting B- and T-lymphocytes, phosphorylation by AURKB leads to enhance its activity, thereby maintaining transcription in resting lymphocytes. Regulates Hox gene expression via histone H2A deubiquitination. Prefers nucleosomal substrates. Does not deubiquitinate histone H2B. Also deubiquitinates non-histone proteins, such as ribosomal protein RPS27A: deubiquitination of monoubiquitinated RPS27A promotes maturation of the 40S ribosomal subunit. Also mediates deubiquitination of tektin proteins (TEKT1, TEKT2, TEK3, TEKT4 and TEKT5), promoting their stability. This Homo sapiens (Human) protein is Ubiquitin carboxyl-terminal hydrolase 16.